The sequence spans 155 residues: Polyadenylate-binding protein-interacting protein 5 (155 aa).

The short motif at 7 to 17 (ALNPHAASYVP) is the PAM2-like element. The CUE domain maps to 66 to 109 (DIDMDIEYLLVTFSGLSQESITDVYLANGGDLEATIEMLNQLEI). The tract at residues 114–155 (SEENLPETLDIGDISESGPSTSKSTEVAASTSSVIPNAPVSA) is disordered. The span at 130–148 (SGPSTSKSTEVAASTSSVI) shows a compositional bias: polar residues.

Specifically expressed in immature siliques.

In terms of biological role, promotes polyploidy in dark-grown seedlings. Regulates the endocycle leading to hypocotyl elongation. This is Polyadenylate-binding protein-interacting protein 5 (CID5) from Arabidopsis thaliana (Mouse-ear cress).